Consider the following 187-residue polypeptide: PsbQ-like protein 3, chloroplastic (187 aa).

The transit peptide at 1–32 (MAISKPPPLHFTFFHNQDSSIDTSDSNLALSI) directs the protein to the chloroplast. A thylakoid-targeting transit peptide spans 33–60 (DTSRRRRDVLLTISGTLIPQLFFFDRKR).

It belongs to the PsbQ family. Subunit of the lumenal protuberance of the NDH complex.

Its subcellular location is the plastid. It is found in the chloroplast thylakoid membrane. In terms of biological role, required for both formation and activity of the chloroplast NAD(P)H dehydrogenase (NDH) complex. This Arabidopsis thaliana (Mouse-ear cress) protein is PsbQ-like protein 3, chloroplastic (PQL3).